Consider the following 259-residue polypeptide: Ribosomal RNA small subunit methyltransferase J (259 aa).

S-adenosyl-L-methionine-binding positions include 101–102 (RD), 117–118 (ER), 153–154 (SS), and Asp176.

Belongs to the methyltransferase superfamily. RsmJ family.

The protein localises to the cytoplasm. The catalysed reaction is guanosine(1516) in 16S rRNA + S-adenosyl-L-methionine = N(2)-methylguanosine(1516) in 16S rRNA + S-adenosyl-L-homocysteine + H(+). Its function is as follows. Specifically methylates the guanosine in position 1516 of 16S rRNA. The chain is Ribosomal RNA small subunit methyltransferase J from Vibrio vulnificus (strain CMCP6).